The primary structure comprises 221 residues: Serine/arginine-rich splicing factor 2 (221 aa).

S2 bears the N-acetylserine mark. Position 2 is a phosphoserine (S2). Residues 14 to 92 (TSLKVDNLTY…RELRVQMARY (79 aa)) enclose the RRM domain. A phosphothreonine mark is found at T22 and T25. The residue at position 26 (S26) is a Phosphoserine. K52 carries the N6-acetyllysine modification. The interval 92 to 221 (YGRPPDSHHS…SPEEEGAVSS (130 aa)) is disordered. 2 stretches are compositionally biased toward basic residues: residues 117-171 (RRSR…RSKS) and 179-189 (SRSRSRSRSRS). Residues S189, S191, S204, S206, S208, S212, and S220 each carry the phosphoserine modification.

It belongs to the splicing factor SR family. As to quaternary structure, interacts with CCNL1 and CCNL2. Interacts with SCAF11. Interacts with ZRSR2/U2AF1-RS2. Interacts with CCDC55 (via C-terminus). In vitro, self-associates and binds SRSF1/SFRS1 (ASF/SF2), SNRNP70 and U2AF1 but not U2AF2. Binds SREK1/SFRS12. Interacts with BRDT. Extensively phosphorylated on serine residues in the RS domain. Phosphorylated by SRPK2 and this causes its redistribution from the nuclear speckle to nucleoplasm and controls cell fate decision in response to cisplatin treatment. KAT5/TIP60 inhibits its phosphorylation by preventing SRPK2 nuclear translocation. Post-translationally, acetylation on Lys-52 by KAT5/TIP60 promotes its proteasomal degradation. This effect is counterbalanced by HDAC6, which positively controls SRSF2 protein level by deacetylating it and preventing its proteasomal degradation. As to expression, expressed in all the tissues examined; liver, kidney, spleen, heart, lung and brain.

The protein resides in the nucleus. Its subcellular location is the nucleoplasm. It localises to the nucleus speckle. Functionally, necessary for the splicing of pre-mRNA. It is required for formation of the earliest ATP-dependent splicing complex and interacts with spliceosomal components bound to both the 5'- and 3'-splice sites during spliceosome assembly. It also is required for ATP-dependent interactions of both U1 and U2 snRNPs with pre-mRNA. Can bind to the myelin basic protein (MBP) gene MB3 regulatory region and increase transcription of the mbp promoter in cells derived from the CNS. The phosphorylated form (by SRPK2) is required for cellular apoptosis in response to cisplatin treatment. The polypeptide is Serine/arginine-rich splicing factor 2 (Srsf2) (Mus musculus (Mouse)).